Consider the following 326-residue polypeptide: Peroxidase 43 (326 aa).

A signal peptide spans Met1–Ala24. 4 disulfide bridges follow: Cys35–Cys112, Cys68–Cys73, Cys118–Cys322, and Cys196–Cys228. His66 serves as the catalytic Proton acceptor. Ca(2+)-binding residues include Asp67, Val70, Gly72, Asp74, and Ser76. Asn151 carries N-linked (GlcNAc...) asparagine glycosylation. Pro159 lines the substrate pocket. Position 189 (His189) interacts with heme b. A Ca(2+)-binding site is contributed by Thr190. The Ca(2+) site is built by Asp241, Ser244, and Asp249.

It belongs to the peroxidase family. Classical plant (class III) peroxidase subfamily. The cofactor is heme b. It depends on Ca(2+) as a cofactor.

The protein localises to the secreted. It carries out the reaction 2 a phenolic donor + H2O2 = 2 a phenolic radical donor + 2 H2O. In terms of biological role, removal of H(2)O(2), oxidation of toxic reductants, biosynthesis and degradation of lignin, suberization, auxin catabolism, response to environmental stresses such as wounding, pathogen attack and oxidative stress. These functions might be dependent on each isozyme/isoform in each plant tissue. This Arabidopsis thaliana (Mouse-ear cress) protein is Peroxidase 43 (PER43).